A 188-amino-acid polypeptide reads, in one-letter code: GTP cyclohydrolase 1 (188 aa).

Zn(2+) contacts are provided by C76, H79, and C148.

The protein belongs to the GTP cyclohydrolase I family. As to quaternary structure, homomer.

It catalyses the reaction GTP + H2O = 7,8-dihydroneopterin 3'-triphosphate + formate + H(+). It functions in the pathway cofactor biosynthesis; 7,8-dihydroneopterin triphosphate biosynthesis; 7,8-dihydroneopterin triphosphate from GTP: step 1/1. The polypeptide is GTP cyclohydrolase 1 (Pelotomaculum thermopropionicum (strain DSM 13744 / JCM 10971 / SI)).